The chain runs to 373 residues: Probable G-protein coupled receptor 173 (373 aa).

Residues 1–26 (MANTTGEPEEVSGALSPPSAVAYVKL) lie on the Extracellular side of the membrane. N-linked (GlcNAc...) asparagine glycosylation is present at Asn-3. A helical membrane pass occupies residues 27–47 (VLLGLIMCVSLAGNAILSLLV). The Cytoplasmic portion of the chain corresponds to 48–59 (LKDRALHKAPYY). A helical membrane pass occupies residues 60-80 (FLLDLCLADGIRSAVCFPFVL). Residues 81-97 (ASVRHGSSWTFSALSCK) lie on the Extracellular side of the membrane. Cys-96 and Cys-174 are oxidised to a cystine. The chain crosses the membrane as a helical span at residues 98-118 (IVAFMAVLFCFHAAFMLFCIS). At 119–139 (VTRYMAIAHHRFYAKRMTLWT) the chain is on the cytoplasmic side. The chain crosses the membrane as a helical span at residues 140–160 (CAAVICMAWTLSVAMAFPPVF). At 161-188 (DVGTYKFIREEDQCIFEHRYFKANDTLG) the chain is on the extracellular side. N-linked (GlcNAc...) asparagine glycosylation is present at Asn-184. Residues 189-209 (FMLMLAVLMAATHAVYGKLLL) traverse the membrane as a helical segment. The Cytoplasmic segment spans residues 210 to 287 (FEYRHRKMKP…VKGEKQLGRM (78 aa)). A helical membrane pass occupies residues 288–308 (FYAITLLFLLLWSPYIVACYW). The Extracellular segment spans residues 309 to 322 (RVFVKACAVPHRYL). Residues 323–343 (ATAVWMSFAQAAVNPIVCFLL) traverse the membrane as a helical segment. The Cytoplasmic segment spans residues 344–373 (NKDLKKCLRTHAPCWGTGGAPAPREPYCVM).

The protein belongs to the G-protein coupled receptor 1 family.

Its subcellular location is the cell membrane. Functionally, is a receptor for the SMIM20 derived peptides Phoenixin-14 and Phoenixin-20. It mediates the Phoenixin-14 and Phoenixin-20 augmentation of gonadotropin-releasing hormone (GNRH) signaling in the hypothalamus and pituitary gland. In the ovary, it mediates the effects of Phoenixin-14 and Phoenixin-20 induced granulosa cell proliferation during follicular growth. This chain is Probable G-protein coupled receptor 173 (GPR173), found in Bos taurus (Bovine).